The following is a 1022-amino-acid chain: Antigenic heat-stable 120 kDa protein (1022 aa).

A disordered region spans residues 1-33 (MSKNGNQDISEFDPLNREFTEAEKQQQMQQEQE). Over residues 14-24 (PLNREFTEAEK) the composition is skewed to basic and acidic residues.

Its subcellular location is the cytoplasm. This is Antigenic heat-stable 120 kDa protein (sca4) from Rickettsia prowazekii (strain Madrid E).